Reading from the N-terminus, the 101-residue chain is uncharacterized protein (101 aa).

Its subcellular location is the cytoplasm. This is an uncharacterized protein from Saccharomyces cerevisiae (strain ATCC 204508 / S288c) (Baker's yeast).